We begin with the raw amino-acid sequence, 88 residues long: Small ribosomal subunit protein uS15 (88 aa).

The protein belongs to the universal ribosomal protein uS15 family. Part of the 30S ribosomal subunit. Forms a bridge to the 50S subunit in the 70S ribosome, contacting the 23S rRNA.

Functionally, one of the primary rRNA binding proteins, it binds directly to 16S rRNA where it helps nucleate assembly of the platform of the 30S subunit by binding and bridging several RNA helices of the 16S rRNA. Forms an intersubunit bridge (bridge B4) with the 23S rRNA of the 50S subunit in the ribosome. In Caldanaerobacter subterraneus subsp. tengcongensis (strain DSM 15242 / JCM 11007 / NBRC 100824 / MB4) (Thermoanaerobacter tengcongensis), this protein is Small ribosomal subunit protein uS15.